Reading from the N-terminus, the 319-residue chain is Beta-ketoacyl-[acyl-carrier-protein] synthase III (319 aa).

Active-site residues include Cys115 and His246. The tract at residues 247-251 is ACP-binding; it reads QANLR. The active site involves Asn276.

This sequence belongs to the thiolase-like superfamily. FabH family. Homodimer.

It is found in the cytoplasm. The enzyme catalyses malonyl-[ACP] + acetyl-CoA + H(+) = 3-oxobutanoyl-[ACP] + CO2 + CoA. It functions in the pathway lipid metabolism; fatty acid biosynthesis. Its function is as follows. Catalyzes the condensation reaction of fatty acid synthesis by the addition to an acyl acceptor of two carbons from malonyl-ACP. Catalyzes the first condensation reaction which initiates fatty acid synthesis and may therefore play a role in governing the total rate of fatty acid production. Possesses both acetoacetyl-ACP synthase and acetyl transacylase activities. Its substrate specificity determines the biosynthesis of branched-chain and/or straight-chain of fatty acids. The protein is Beta-ketoacyl-[acyl-carrier-protein] synthase III of Coxiella burnetii (strain RSA 493 / Nine Mile phase I).